The chain runs to 247 residues: ATP synthase subunit a, chloroplastic (247 aa).

The next 5 helical transmembrane spans lie at 38–58, 95–115, 134–154, 199–219, and 220–240; these read QVLI…ALAV, VPFI…GALL, INTT…AGLT, LVVV…VMFL, and GLFT…AYIG.

Belongs to the ATPase A chain family. F-type ATPases have 2 components, CF(1) - the catalytic core - and CF(0) - the membrane proton channel. CF(1) has five subunits: alpha(3), beta(3), gamma(1), delta(1), epsilon(1). CF(0) has four main subunits: a, b, b' and c.

It localises to the plastid. The protein resides in the chloroplast thylakoid membrane. Functionally, key component of the proton channel; it plays a direct role in the translocation of protons across the membrane. The protein is ATP synthase subunit a, chloroplastic of Helianthus annuus (Common sunflower).